The chain runs to 612 residues: Elongation factor 4 (612 aa).

The region spanning lysine 11–threonine 193 is the tr-type G domain. Residues aspartate 23 to threonine 28 and asparagine 140 to aspartate 143 contribute to the GTP site.

It belongs to the TRAFAC class translation factor GTPase superfamily. Classic translation factor GTPase family. LepA subfamily.

It localises to the cell membrane. It carries out the reaction GTP + H2O = GDP + phosphate + H(+). Its function is as follows. Required for accurate and efficient protein synthesis under certain stress conditions. May act as a fidelity factor of the translation reaction, by catalyzing a one-codon backward translocation of tRNAs on improperly translocated ribosomes. Back-translocation proceeds from a post-translocation (POST) complex to a pre-translocation (PRE) complex, thus giving elongation factor G a second chance to translocate the tRNAs correctly. Binds to ribosomes in a GTP-dependent manner. This Latilactobacillus sakei subsp. sakei (strain 23K) (Lactobacillus sakei subsp. sakei) protein is Elongation factor 4.